The primary structure comprises 150 residues: Large ribosomal subunit protein bL9 (150 aa).

Belongs to the bacterial ribosomal protein bL9 family.

Its function is as follows. Binds to the 23S rRNA. The polypeptide is Large ribosomal subunit protein bL9 (Colwellia psychrerythraea (strain 34H / ATCC BAA-681) (Vibrio psychroerythus)).